The primary structure comprises 96 residues: Co-chaperonin GroES (96 aa).

The protein belongs to the GroES chaperonin family. Heptamer of 7 subunits arranged in a ring. Interacts with the chaperonin GroEL.

It is found in the cytoplasm. Together with the chaperonin GroEL, plays an essential role in assisting protein folding. The GroEL-GroES system forms a nano-cage that allows encapsulation of the non-native substrate proteins and provides a physical environment optimized to promote and accelerate protein folding. GroES binds to the apical surface of the GroEL ring, thereby capping the opening of the GroEL channel. This Paraburkholderia phytofirmans (strain DSM 17436 / LMG 22146 / PsJN) (Burkholderia phytofirmans) protein is Co-chaperonin GroES.